The chain runs to 145 residues: Maximins 3/H9 type 1 (145 aa).

Positions 1-18 are cleaved as a signal peptide; it reads MNFKYIVAVSFLIASAYA. 2 consecutive propeptides follow at residues 19-43 and 74-124; these read RSVQ…LREI and RTAE…KEKR. Ile-144 carries the isoleucine amide modification.

The protein belongs to the bombinin family. As to expression, expressed by the skin glands.

The protein resides in the secreted. In terms of biological role, maximin-3 shows antibacterial activity against both Gram-positive and Gram-negative bacteria. It also shows antimicrobial activity against the fungus C.albicans, but not against A.flavus nor P.uticale. It has little hemolytic activity. It possess a significant cytotoxicity against tumor cell lines. It possess a significant anti-HIV activity. It shows high spermicidal activity. Its function is as follows. Maximin-H9 shows antimicrobial activity against bacteria and against the fungus C.albicans. Shows strong hemolytic activity. This chain is Maximins 3/H9 type 1, found in Bombina maxima (Giant fire-bellied toad).